Here is a 171-residue protein sequence, read N- to C-terminus: Der GTPase-activating protein YihI (171 aa).

Disordered stretches follow at residues 1–99 and 145–171; these read MKKP…QAEL and LSYDDDDEDDEEDEKQEDMMRLLRGGN. Residues 20–30 show a composition bias toward basic and acidic residues; the sequence is TREELNQEARD. Positions 31-40 are enriched in basic residues; it reads RKRLKKHRGH. Residues 147 to 160 are compositionally biased toward acidic residues; that stretch reads YDDDDEDDEEDEKQ.

This sequence belongs to the YihI family. In terms of assembly, interacts with Der.

Its function is as follows. A GTPase-activating protein (GAP) that modifies Der/EngA GTPase function. May play a role in ribosome biogenesis. This Salmonella choleraesuis (strain SC-B67) protein is Der GTPase-activating protein YihI.